We begin with the raw amino-acid sequence, 135 residues long: Large ribosomal subunit protein uL16c (135 aa).

It belongs to the universal ribosomal protein uL16 family. As to quaternary structure, part of the 50S ribosomal subunit.

The protein localises to the plastid. The protein resides in the chloroplast. The polypeptide is Large ribosomal subunit protein uL16c (Nymphaea alba (White water-lily)).